A 257-amino-acid polypeptide reads, in one-letter code: Zinc-finger homeodomain protein 6 (257 aa).

Residues 1-35 form a disordered region; the sequence is MEFRGHDEPVDEMGVAYGRTPPSSSSSPAASASAG. A compositionally biased stretch (low complexity) spans 21-35; sequence PPSSSSSPAASASAG. The ZF-HD dimerization-type; degenerate zinc finger occupies 45–93; it reads YHECLRNHAAAMGGHVVDGCGEFMPMPGDAADALKCAACGCHRSFHRKD. A compositionally biased stretch (pro residues) spans 106 to 125; sequence PSPPTPRVPLLMPPPQPQPH. 2 disordered regions span residues 106–182 and 228–257; these read PSPP…TKFT and NNKS…QQQQ. Residues 141–155 show a composition bias toward low complexity; the sequence is YHHTPSGSGGTTTES. Positions 174–237 form a DNA-binding region, homeobox; it reads RKRFRTKFTP…NNKSSIGSSS (64 aa). Low complexity predominate over residues 242–257; that stretch reads RRQPQEQQSQQQQQQQ.

Homo- and heterodimer with other ZFHD proteins.

Its subcellular location is the nucleus. Its function is as follows. Putative transcription factor. This is Zinc-finger homeodomain protein 6 (ZHD6) from Oryza sativa subsp. indica (Rice).